The following is a 276-amino-acid chain: NH(3)-dependent NAD(+) synthetase (276 aa).

Gly-43–Ser-50 provides a ligand contact to ATP. Asp-49 is a binding site for Mg(2+). Arg-146 contributes to the deamido-NAD(+) binding site. Thr-166 provides a ligand contact to ATP. Glu-171 serves as a coordination point for Mg(2+). Residues Lys-179 and Asp-186 each coordinate deamido-NAD(+). The ATP site is built by Lys-195 and Thr-217. Deamido-NAD(+) is bound at residue His-266–Lys-267.

Belongs to the NAD synthetase family. Homodimer.

It carries out the reaction deamido-NAD(+) + NH4(+) + ATP = AMP + diphosphate + NAD(+) + H(+). The protein operates within cofactor biosynthesis; NAD(+) biosynthesis; NAD(+) from deamido-NAD(+) (ammonia route): step 1/1. In terms of biological role, catalyzes the ATP-dependent amidation of deamido-NAD to form NAD. Uses ammonia as a nitrogen source. The polypeptide is NH(3)-dependent NAD(+) synthetase (Shewanella putrefaciens (strain CN-32 / ATCC BAA-453)).